Reading from the N-terminus, the 37-residue chain is uncharacterized protein (37 aa).

The signal sequence occupies residues methionine 1–serine 23.

Belongs to the orthopoxviruses VACWR204.5 protein family.

This is an uncharacterized protein from Vaccinia virus (strain Western Reserve) (VACV).